The sequence spans 177 residues: Probable phospholipid hydroperoxide glutathione peroxidase (177 aa).

The active site involves cysteine 42.

Belongs to the glutathione peroxidase family.

Its subcellular location is the cytoplasm. The catalysed reaction is a hydroperoxy polyunsaturated fatty acid + 2 glutathione = a hydroxy polyunsaturated fatty acid + glutathione disulfide + H2O. Protects cells and enzymes from oxidative damage, by catalyzing the reduction of hydrogen peroxide, lipid peroxides and organic hydroperoxide, by glutathione. The polypeptide is Probable phospholipid hydroperoxide glutathione peroxidase (Encephalitozoon cuniculi (strain GB-M1) (Microsporidian parasite)).